The sequence spans 145 residues: S-adenosylmethionine synthase 2 (145 aa).

ATP-binding positions include 6–7, alanine 23, lysine 27, and lysine 31; that span reads RK. Residue lysine 31 participates in L-methionine binding.

This sequence belongs to the AdoMet synthase family. In terms of assembly, homotetramer. Mn(2+) serves as cofactor. The cofactor is Mg(2+). Requires Co(2+) as cofactor. It depends on K(+) as a cofactor. In terms of tissue distribution, mainly in floral buds and roots.

It is found in the cytoplasm. It carries out the reaction L-methionine + ATP + H2O = S-adenosyl-L-methionine + phosphate + diphosphate. It functions in the pathway amino-acid biosynthesis; S-adenosyl-L-methionine biosynthesis; S-adenosyl-L-methionine from L-methionine: step 1/1. Its function is as follows. Catalyzes the formation of S-adenosylmethionine from methionine and ATP. The reaction comprises two steps that are both catalyzed by the same enzyme: formation of S-adenosylmethionine (AdoMet) and triphosphate, and subsequent hydrolysis of the triphosphate. This Petroselinum crispum (Parsley) protein is S-adenosylmethionine synthase 2 (SMS-2).